Reading from the N-terminus, the 411-residue chain is MQTYLVGGAVRDALLGLKVVDKDWMVVGATPEQMLAQGYEQVGSDFPVFLHPKTKQEYALARTERKSGKGYTGFICYSAPDVTLEQDLMRRDLTINAIAQEKDGRLIDPYNGQQDLDNKILRHVSPAFVEDPLRVLRVARFSARFAHLGFTIAPETIALMQEMVVAGELEALTPERVWKEWEKSLSTENPEVFLTVLRQCGALKVVMPEIDALFGVPQPAQWHPEIDCGIHTLMVAKQAAELSPNKVIRFAAQVHDLGKALSPKDDLPSHKMHCKDGLKPIKALCQRLRVPNDYRDTALMVCAQHTKIHHANEMRPATFVNILDQIDSWRKPERVIQLALCCRADARGRTGHENDAYLQADILLAAFDAAQQVDVKPIVAAGFKGKDIKEQLAIHRTAAVELAIKPLQSKA.

ATP contacts are provided by Gly8 and Arg11. CTP-binding residues include Gly8 and Arg11. Residues Asp21 and Asp23 each contribute to the Mg(2+) site. Arg91, Arg137, and Arg140 together coordinate ATP. 3 residues coordinate CTP: Arg91, Arg137, and Arg140. An HD domain is found at 228–329; it reads CGIHTLMVAK…VNILDQIDSW (102 aa).

It belongs to the tRNA nucleotidyltransferase/poly(A) polymerase family. Bacterial CCA-adding enzyme type 1 subfamily. Monomer. Can also form homodimers and oligomers. It depends on Mg(2+) as a cofactor. Requires Ni(2+) as cofactor.

The catalysed reaction is a tRNA precursor + 2 CTP + ATP = a tRNA with a 3' CCA end + 3 diphosphate. The enzyme catalyses a tRNA with a 3' CCA end + 2 CTP + ATP = a tRNA with a 3' CCACCA end + 3 diphosphate. Catalyzes the addition and repair of the essential 3'-terminal CCA sequence in tRNAs without using a nucleic acid template. Adds these three nucleotides in the order of C, C, and A to the tRNA nucleotide-73, using CTP and ATP as substrates and producing inorganic pyrophosphate. tRNA 3'-terminal CCA addition is required both for tRNA processing and repair. Also involved in tRNA surveillance by mediating tandem CCA addition to generate a CCACCA at the 3' terminus of unstable tRNAs. While stable tRNAs receive only 3'-terminal CCA, unstable tRNAs are marked with CCACCA and rapidly degraded. This is Multifunctional CCA protein from Photobacterium profundum (strain SS9).